Consider the following 230-residue polypeptide: Large ribosomal subunit protein uL1 (230 aa).

It belongs to the universal ribosomal protein uL1 family. In terms of assembly, part of the 50S ribosomal subunit.

In terms of biological role, binds directly to 23S rRNA. The L1 stalk is quite mobile in the ribosome, and is involved in E site tRNA release. Functionally, protein L1 is also a translational repressor protein, it controls the translation of the L11 operon by binding to its mRNA. This chain is Large ribosomal subunit protein uL1, found in Leptospira borgpetersenii serovar Hardjo-bovis (strain JB197).